A 415-amino-acid polypeptide reads, in one-letter code: Acetate kinase (415 aa).

Asparagine 8 contributes to the Mg(2+) binding site. Lysine 15 contacts ATP. Arginine 106 contributes to the substrate binding site. Aspartate 163 functions as the Proton donor/acceptor in the catalytic mechanism. ATP-binding positions include histidine 222–glycine 226, aspartate 296–arginine 298, and glycine 344–asparagine 348. Position 397 (glutamate 397) interacts with Mg(2+).

It belongs to the acetokinase family. As to quaternary structure, homodimer. Mg(2+) is required as a cofactor. Requires Mn(2+) as cofactor.

Its subcellular location is the cytoplasm. It carries out the reaction acetate + ATP = acetyl phosphate + ADP. It functions in the pathway metabolic intermediate biosynthesis; acetyl-CoA biosynthesis; acetyl-CoA from acetate: step 1/2. Its function is as follows. Catalyzes the formation of acetyl phosphate from acetate and ATP. Can also catalyze the reverse reaction. The polypeptide is Acetate kinase (Thermosynechococcus vestitus (strain NIES-2133 / IAM M-273 / BP-1)).